Here is a 141-residue protein sequence, read N- to C-terminus: Hemoglobin subunit alpha-D (141 aa).

Residues 1 to 141 (MLSADEKQLI…VSDVLAEKYR (141 aa)) form the Globin domain. 2 residues coordinate heme b: histidine 58 and histidine 87.

Belongs to the globin family. As to quaternary structure, heterotetramer of two alpha-D chains and two beta chains. As to expression, red blood cells.

Functionally, involved in oxygen transport from the lung to the various peripheral tissues. This chain is Hemoglobin subunit alpha-D (HBAD), found in Phrynops hilarii (Snake-necked turtle).